A 99-amino-acid polypeptide reads, in one-letter code: Putative pterin-4-alpha-carbinolamine dehydratase (99 aa).

The protein belongs to the pterin-4-alpha-carbinolamine dehydratase family.

The enzyme catalyses (4aS,6R)-4a-hydroxy-L-erythro-5,6,7,8-tetrahydrobiopterin = (6R)-L-erythro-6,7-dihydrobiopterin + H2O. This is Putative pterin-4-alpha-carbinolamine dehydratase from Bradyrhizobium sp. (strain BTAi1 / ATCC BAA-1182).